We begin with the raw amino-acid sequence, 348 residues long: Beta-hexosaminidase (348 aa).

Residues D64, R72, R138, and 168 to 169 contribute to the substrate site; that span reads KH. H181 functions as the Proton donor/acceptor in the catalytic mechanism. Residue D252 is the Nucleophile of the active site.

It belongs to the glycosyl hydrolase 3 family. NagZ subfamily.

It is found in the cytoplasm. The catalysed reaction is Hydrolysis of terminal non-reducing N-acetyl-D-hexosamine residues in N-acetyl-beta-D-hexosaminides.. It functions in the pathway cell wall biogenesis; peptidoglycan recycling. In terms of biological role, plays a role in peptidoglycan recycling by cleaving the terminal beta-1,4-linked N-acetylglucosamine (GlcNAc) from peptide-linked peptidoglycan fragments, giving rise to free GlcNAc, anhydro-N-acetylmuramic acid and anhydro-N-acetylmuramic acid-linked peptides. The sequence is that of Beta-hexosaminidase from Nitrosomonas eutropha (strain DSM 101675 / C91 / Nm57).